A 78-amino-acid polypeptide reads, in one-letter code: Ubiquinol-cytochrome-c reductase complex assembly factor 3 (78 aa).

The Mitochondrial matrix portion of the chain corresponds to 1 to 5 (MSGMR). A helical membrane pass occupies residues 6 to 26 (ILTGSVALGGLTYAIWIIFSP). Residues 27–78 (GEERKKEILKSLPEANPVRMEETRKRNAIMLQVLKDAAETNDNIARGFGSQK) lie on the Mitochondrial intermembrane side of the membrane.

The protein belongs to the UQCC3 family. As to quaternary structure, associates with the ubiquinol-cytochrome c reductase complex (mitochondrial respiratory chain complex III or cytochrome b-c1 complex).

Its subcellular location is the mitochondrion inner membrane. In terms of biological role, required for the assembly of the ubiquinol-cytochrome c reductase complex (mitochondrial respiratory chain complex III or cytochrome b-c1 complex), mediating cytochrome b recruitment and probably stabilization within the complex. Thereby, plays an important role in ATP production by mitochondria. Cardiolipin-binding protein, it may also control the cardiolipin composition of mitochondria membranes and their morphology. The polypeptide is Ubiquinol-cytochrome-c reductase complex assembly factor 3 (Danio rerio (Zebrafish)).